Consider the following 172-residue polypeptide: ATP synthase subunit b (172 aa).

The chain crosses the membrane as a helical span at residues 18–38 (IVWSLIILVIVAVFFYKFFMP).

Belongs to the ATPase B chain family. As to quaternary structure, F-type ATPases have 2 components, F(1) - the catalytic core - and F(0) - the membrane proton channel. F(1) has five subunits: alpha(3), beta(3), gamma(1), delta(1), epsilon(1). F(0) has three main subunits: a(1), b(2) and c(10-14). The alpha and beta chains form an alternating ring which encloses part of the gamma chain. F(1) is attached to F(0) by a central stalk formed by the gamma and epsilon chains, while a peripheral stalk is formed by the delta and b chains.

It is found in the cell membrane. Functionally, f(1)F(0) ATP synthase produces ATP from ADP in the presence of a proton or sodium gradient. F-type ATPases consist of two structural domains, F(1) containing the extramembraneous catalytic core and F(0) containing the membrane proton channel, linked together by a central stalk and a peripheral stalk. During catalysis, ATP synthesis in the catalytic domain of F(1) is coupled via a rotary mechanism of the central stalk subunits to proton translocation. Its function is as follows. Component of the F(0) channel, it forms part of the peripheral stalk, linking F(1) to F(0). In Bifidobacterium longum (strain DJO10A), this protein is ATP synthase subunit b.